A 405-amino-acid polypeptide reads, in one-letter code: Diaminopimelate decarboxylase (405 aa).

Lys-46 bears the N6-(pyridoxal phosphate)lysine mark. Pyridoxal 5'-phosphate is bound by residues Gly-225 and 259–262 (EPGR). 3 residues coordinate substrate: Arg-262, Arg-298, and Tyr-302. The active-site Proton donor is the Cys-329. 2 residues coordinate substrate: Glu-330 and Tyr-358. A pyridoxal 5'-phosphate-binding site is contributed by Tyr-358.

Belongs to the Orn/Lys/Arg decarboxylase class-II family. LysA subfamily. In terms of assembly, homodimer. Pyridoxal 5'-phosphate is required as a cofactor.

It catalyses the reaction meso-2,6-diaminopimelate + H(+) = L-lysine + CO2. Its pathway is amino-acid biosynthesis; L-lysine biosynthesis via DAP pathway; L-lysine from DL-2,6-diaminopimelate: step 1/1. Its function is as follows. Specifically catalyzes the decarboxylation of meso-diaminopimelate (meso-DAP) to L-lysine. The polypeptide is Diaminopimelate decarboxylase (Helicobacter pylori (Campylobacter pylori)).